The sequence spans 391 residues: Processive diacylglycerol beta-glucosyltransferase (391 aa).

The protein belongs to the glycosyltransferase 28 family. UgtP subfamily.

It localises to the cell membrane. It carries out the reaction a 1,2-diacyl-3-O-(beta-D-glucopyranosyl)-sn-glycerol + UDP-alpha-D-glucose = a 1,2-diacyl-3-O-(beta-D-Glc-(1-&gt;6)-beta-D-Glc)-sn-glycerol + UDP + H(+). The enzyme catalyses a 1,2-diacyl-sn-glycerol + UDP-alpha-D-glucose = a 1,2-diacyl-3-O-(beta-D-glucopyranosyl)-sn-glycerol + UDP + H(+). The protein operates within glycolipid metabolism; diglucosyl-diacylglycerol biosynthesis. Functionally, processive glucosyltransferase involved in the biosynthesis of both the bilayer- and non-bilayer-forming membrane glucolipids. Is able to successively transfer two glucosyl residues to diacylglycerol (DAG), thereby catalyzing the formation of beta-monoglucosyl-DAG (3-O-(beta-D-glucopyranosyl)-1,2-diacyl-sn-glycerol) and beta-diglucosyl-DAG (3-O-(beta-D-glucopyranosyl-beta-(1-&gt;6)-D-glucopyranosyl)-1,2-diacyl-sn-glycerol). Beta-diglucosyl-DAG is the predominant glycolipid found in Bacillales and is also used as a membrane anchor for lipoteichoic acid (LTA). This is Processive diacylglycerol beta-glucosyltransferase from Staphylococcus epidermidis (strain ATCC 12228 / FDA PCI 1200).